Consider the following 335-residue polypeptide: MRTPATVVAGVDLGDAVFAAAVRAGVARVEQLMDTELRQADEVMSDSLLHLFNAGGKRFRPLFTVLSAQIGPQPDAAAVTVAGAVIEMIHLATLYHDDVMDEAQVRRGAPSANAQWGNNVAILAGDYLLATASRLVARLGPEAVRIIADTFAQLVTGQMRETRGTSENVDSIEQYLKVVQEKTGSLIGAAGRLGGMFSGATDEQVERLSRLGGVVGTAFQIADDIIDIDSESDESGKLPGTDVREGVHTLPMLYALRESGPDCARLRALLNGPVDDDAEVREALTLLRASPGMARAKDVLAQYAAQARHELALLPDVPGRRALAALVDYTVSRHG.

Isopentenyl diphosphate contacts are provided by lysine 57, arginine 60, and histidine 90. Positions 97 and 101 each coordinate Mg(2+). Residues 97 to 101 carry the DDXXD motif motif; sequence DDVMD. Isopentenyl diphosphate is bound at residue arginine 107. A DDXXD motif motif is present at residues 223–227; that stretch reads DDIID.

The protein belongs to the FPP/GGPP synthase family. Requires Mg(2+) as cofactor.

It carries out the reaction isopentenyl diphosphate + (2E)-geranyl diphosphate = (2E,6E)-farnesyl diphosphate + diphosphate. It catalyses the reaction isopentenyl diphosphate + (2E,6E)-farnesyl diphosphate = (2E,6E,10E)-geranylgeranyl diphosphate + diphosphate. The enzyme catalyses 5 isopentenyl diphosphate + (2E,6E,10E)-geranylgeranyl diphosphate = all-trans-nonaprenyl diphosphate + 5 diphosphate. It functions in the pathway isoprenoid biosynthesis; farnesyl diphosphate biosynthesis; farnesyl diphosphate from geranyl diphosphate and isopentenyl diphosphate. Its pathway is isoprenoid biosynthesis; geranylgeranyl diphosphate biosynthesis; geranylgeranyl diphosphate from farnesyl diphosphate and isopentenyl diphosphate: step 1/1. Functionally, catalyzes the sequential condensations of isopentenyl pyrophosphate (IPP) with geranyl diphosphate (GPP) to yield (2E,6E)-farnesyl diphosphate (E,E-FPP), with E,E-FPP to yield geranylgeranyl diphosphate (GGPP) and with GGPP to yield nonaprenyl diphosphate. May also have weak activity with dimethylallyl diphosphate (DMAPP). In Mycobacterium tuberculosis (strain ATCC 25618 / H37Rv), this protein is Nonaprenyl diphosphate synthase.